We begin with the raw amino-acid sequence, 1616 residues long: Helicase SWR1 (1616 aa).

A compositionally biased stretch (basic residues) spans Met1–Asn10. 2 disordered regions span residues Met1–Glu53 and Lys185–Asp238. Over residues Thr11–Thr26 the composition is skewed to polar residues. Positions Pro200–Lys209 are enriched in low complexity. The HSA domain maps to Ile396 to Lys468. Disordered regions lie at residues Asn521 to Asp565, Ile583 to Lys614, and Leu645 to Pro774. Residues Glu529–Thr538 are compositionally biased toward acidic residues. The span at Leu645–Glu654 shows a compositional bias: basic and acidic residues. The segment covering Thr705–Glu737 has biased composition (acidic residues). Over residues Pro738–Glu751 the composition is skewed to basic and acidic residues. A compositionally biased stretch (acidic residues) spans Lys752–Val763. The Helicase ATP-binding domain maps to Ala793–Ser958. Position 806–813 (Asp806–Thr813) interacts with ATP. The DEAH box motif lies at Asp909–His912. The segment at Asn992 to Thr1013 is disordered. The span at Glu1001–Thr1013 shows a compositional bias: basic and acidic residues. The Helicase C-terminal domain occupies Lys1333–Thr1486. The interval Asp1545–Val1576 is disordered. The span at Ala1555–Gly1567 shows a compositional bias: polar residues.

It belongs to the SNF2/RAD54 helicase family. SWR1 subfamily. Component of the SWR1 chromatin-remodeling complex.

It localises to the nucleus. It catalyses the reaction ATP + H2O = ADP + phosphate + H(+). Its function is as follows. Catalytic component of the SWR1 complex which mediates the ATP-dependent exchange of histone H2A for the H2A variant HZT1 leading to transcriptional regulation of selected genes by chromatin remodeling. The sequence is that of Helicase SWR1 (SWR1) from Debaryomyces hansenii (strain ATCC 36239 / CBS 767 / BCRC 21394 / JCM 1990 / NBRC 0083 / IGC 2968) (Yeast).